Here is a 238-residue protein sequence, read N- to C-terminus: Large ribosomal subunit protein bL17m (238 aa).

Belongs to the bacterial ribosomal protein bL17 family. In terms of assembly, component of the mitochondrial large ribosomal subunit (mt-LSU). Mature yeast 74S mitochondrial ribosomes consist of a small (37S) and a large (54S) subunit. The 37S small subunit contains a 15S ribosomal RNA (15S mt-rRNA) and 34 different proteins. The 54S large subunit contains a 21S rRNA (21S mt-rRNA) and 46 different proteins.

The protein localises to the mitochondrion. In terms of biological role, component of the mitochondrial ribosome (mitoribosome), a dedicated translation machinery responsible for the synthesis of mitochondrial genome-encoded proteins, including at least some of the essential transmembrane subunits of the mitochondrial respiratory chain. The mitoribosomes are attached to the mitochondrial inner membrane and translation products are cotranslationally integrated into the membrane. The polypeptide is Large ribosomal subunit protein bL17m (MRPL8) (Saccharomyces cerevisiae (strain ATCC 204508 / S288c) (Baker's yeast)).